Reading from the N-terminus, the 117-residue chain is NADH-ubiquinone oxidoreductase chain 3 (117 aa).

3 consecutive transmembrane segments (helical) span residues 5-25 (ALSS…AWVL), 57-77 (FFLL…LMPL), and 86-106 (VFTT…GLIH).

It belongs to the complex I subunit 3 family.

The protein localises to the mitochondrion membrane. It carries out the reaction a ubiquinone + NADH + 5 H(+)(in) = a ubiquinol + NAD(+) + 4 H(+)(out). Core subunit of the mitochondrial membrane respiratory chain NADH dehydrogenase (Complex I) that is believed to belong to the minimal assembly required for catalysis. Complex I functions in the transfer of electrons from NADH to the respiratory chain. The immediate electron acceptor for the enzyme is believed to be ubiquinone. In Lumbricus terrestris (Common earthworm), this protein is NADH-ubiquinone oxidoreductase chain 3 (ND3).